Here is a 137-residue protein sequence, read N- to C-terminus: MLQQPTIRHPIAVSLGAIAGALSRYYLSLWFAQRFGITFPYGTLFINITGCLAMGFFYALALERVSLISPEIRLLIAVGFLGAYTTFSTYALDTFTLLGDRNLVAAGFYWAGSTILGVISIQIGIILGRLCGKGLGV.

4 helical membrane passes run 11-31 (IAVS…SLWF), 42-62 (GTLF…ALAL), 75-95 (LIAV…LDTF), and 107-127 (GFYW…GIIL). The Na(+) site is built by G82 and T85.

It belongs to the fluoride channel Fluc/FEX (TC 1.A.43) family.

It localises to the cell inner membrane. The catalysed reaction is fluoride(in) = fluoride(out). Its activity is regulated as follows. Na(+) is not transported, but it plays an essential structural role and its presence is essential for fluoride channel function. Functionally, fluoride-specific ion channel. Important for reducing fluoride concentration in the cell, thus reducing its toxicity. The chain is Fluoride-specific ion channel FluC from Trichormus variabilis (strain ATCC 29413 / PCC 7937) (Anabaena variabilis).